The primary structure comprises 340 residues: Protein-arginine kinase (340 aa).

Residues 21–242 (VVLSSRIRLA…EQIIMQERVA (222 aa)) form the Phosphagen kinase C-terminal domain. Residues 24 to 28 (SSRIR), His-79, Arg-113, 164 to 168 (RASVM), and 195 to 200 (RGIYGE) contribute to the ATP site.

It belongs to the ATP:guanido phosphotransferase family.

The catalysed reaction is L-arginyl-[protein] + ATP = N(omega)-phospho-L-arginyl-[protein] + ADP + H(+). In terms of biological role, catalyzes the specific phosphorylation of arginine residues in proteins. In Listeria monocytogenes serotype 4b (strain F2365), this protein is Protein-arginine kinase.